A 1294-amino-acid polypeptide reads, in one-letter code: Unconventional myosin-VI (1294 aa).

The 52-residue stretch at 2–53 folds into the Myosin N-terminal SH3-like domain; that stretch reads EDGKPVWAPHPTDGFQMGNIVDIGPDSLTIEPLNQKGKTFLALINQVFPAEE. One can recognise a Myosin motor domain in the interval 57 to 771; it reads KDVEDNCSLM…KFAEFDQIMK (715 aa). Position 151–158 (151–158) interacts with ATP; the sequence is GESGAGKT. The residue at position 267 (Ser267) is a Phosphoserine. A responsible for slow ATPase activity region spans residues 273 to 317; sequence YLNRGCTRYFANKETDKQILQNRKSPEYLKAGSMKDPLLDDHGDF. The residue at position 405 (Thr405) is a Phosphothreonine. At Ser604 the chain carries Phosphoserine. Positions 665 to 672 are actin-binding; the sequence is FIRCIKPN. The required for binding calmodulin stretch occupies residues 782-810; the sequence is KRVNHWLTCSRWKKVQWCSLSVIKLKNKI. Positions 814–834 constitute an IQ domain; sequence AEACIKMQKTIRMWLCKRRHK. Residues 835–916 form a three-helix bundle region; that stretch reads PRIDGLVKVG…EELLSALQKK (82 aa). The interval 917–984 is SAH; sequence KQQEEEAERL…EDDEKRIQAE (68 aa). The segment at 934–955 is disordered; sequence EKERKRREEDEKRRRKEEEERR. Position 1025 is a phosphoserine (Ser1025). Residues 1060–1285 form an interaction with TAX1BP1 and CALCOCO2/NDP52 region; that stretch reads KEMSEFLSRG…ESRQARPTYA (226 aa). Positions 1116 to 1118 are interaction with OPTN; the sequence is RRL. Phosphoserine is present on Ser1155. The tract at residues 1157 to 1285 is interaction with TOM1; the sequence is QQNPAAQIPA…ESRQARPTYA (129 aa).

It belongs to the TRAFAC class myosin-kinesin ATPase superfamily. Myosin family. Homodimer; dimerization seems to implicate the unfolding of the three-helix bundle region creating an additional calmodulin binding site, and cargo binding. Able to function as a monomer under specific conditions in vitro. Forms a complex with CFTR and DAB2 in the apical membrane of epithelial cells. Component of the DISP/DOCK7-induced septin displacement complex, at least composed of DOCK7, LRCH3 and MYO6. Binding to calmodulin through a unique insert, not found in other myosins, located in the neck region between the motor domain and the IQ domain appears to contribute to the directionality reversal. This interaction occurs only if the C-terminal lobe of calmodulin is occupied by calcium. Interaction with F-actin/ACTN1 occurs only at the apical brush border domain of the proximal tubule cells. Interacts with DAB2. In vitro, the C-terminal globular tail binds a C-terminal region of DAB2. Interacts with CFTR. Interacts with CABP5. Interacts with TOM1. Interacts with OPTN. Interacts with TAX1BP1 and CALCOCO2/NDP52. Interacts with TOM1L2. Interacts with CLIC5; may work together in a complex which also includes RDX and MYO6 to stabilize linkages between the plasma membrane and subjacent actin cytoskeleton at the base of stereocilia. Post-translationally, phosphorylation in the motor domain, induced by EGF, results in translocation of MYO6 from the cell surface to membrane ruffles and affects F-actin dynamics. Phosphorylated in vitro by p21-activated kinase (PAK). As to expression, expressed in most tissues examined including heart, brain, placenta, pancreas, spleen, thymus, prostate, testis, ovary, small intestine and colon. Highest levels in brain, pancreas, testis and small intestine. Also expressed in fetal brain and cochlea. Isoform 1 and isoform 2, containing the small insert, and isoform 4, containing neither insert, are expressed in unpolarized epithelial cells.

The protein localises to the golgi apparatus. It is found in the trans-Golgi network membrane. Its subcellular location is the nucleus. It localises to the cytoplasm. The protein resides in the perinuclear region. The protein localises to the membrane. It is found in the clathrin-coated pit. Its subcellular location is the cytoplasmic vesicle. It localises to the clathrin-coated vesicle. The protein resides in the cell projection. The protein localises to the filopodium. It is found in the ruffle membrane. Its subcellular location is the microvillus. It localises to the cytosol. The protein resides in the autophagosome. The protein localises to the endosome. It is found in the clathrin-coated vesicle membrane. Functionally, myosins are actin-based motor molecules with ATPase activity. Unconventional myosins serve in intracellular movements. Myosin 6 is a reverse-direction motor protein that moves towards the minus-end of actin filaments. Has slow rate of actin-activated ADP release due to weak ATP binding. Functions in a variety of intracellular processes such as vesicular membrane trafficking and cell migration. Required for the structural integrity of the Golgi apparatus via the p53-dependent pro-survival pathway. Appears to be involved in a very early step of clathrin-mediated endocytosis in polarized epithelial cells. Together with TOM1, mediates delivery of endocytic cargo to autophagosomes thereby promoting autophagosome maturation and driving fusion with lysosomes. Links TOM1 with autophagy receptors, such as TAX1BP1; CALCOCO2/NDP52 and OPTN. May act as a regulator of F-actin dynamics. As part of the DISP complex, may regulate the association of septins with actin and thereby regulate the actin cytoskeleton. May play a role in transporting DAB2 from the plasma membrane to specific cellular targets. May play a role in the extension and network organization of neurites. Required for structural integrity of inner ear hair cells. Required for the correct localization of CLIC5 and RDX at the stereocilium base. Modulates RNA polymerase II-dependent transcription. The sequence is that of Unconventional myosin-VI from Homo sapiens (Human).